We begin with the raw amino-acid sequence, 169 residues long: FAM231A/C-like protein LOC102723383 (169 aa).

The segment at 82–140 (LIRSGSSQNESQEDQGAGLISQAGLKADNRRESSTWANEVEDRRPQCTPALNLTPSHPH) is disordered.

It belongs to the FAM231 family.

The protein is FAM231A/C-like protein LOC102723383 of Homo sapiens (Human).